Consider the following 214-residue polypeptide: Large ribosomal subunit protein uL16-like (214 aa).

This sequence belongs to the universal ribosomal protein uL16 family. In terms of assembly, component of the 60S large ribosomal subunit (LSU).

The protein localises to the cytoplasm. Functionally, testis-specific component of the ribosome, which is required for the transition from prophase to metaphase in male meiosis I. Compensates for the inactivated X-linked RPL10 paralog during spermatogenesis. The ribosome is a large ribonucleoprotein complex responsible for the synthesis of proteins in the cell. The small ribosomal subunit (SSU) binds messenger RNAs (mRNAs) and translates the encoded message by selecting cognate aminoacyl-transfer RNA (tRNA) molecules. The large subunit (LSU) contains the ribosomal catalytic site termed the peptidyl transferase center (PTC), which catalyzes the formation of peptide bonds, thereby polymerizing the amino acids delivered by tRNAs into a polypeptide chain. The nascent polypeptides leave the ribosome through a tunnel in the LSU and interact with protein factors that function in enzymatic processing, targeting, and the membrane insertion of nascent chains at the exit of the ribosomal tunnel. This is Large ribosomal subunit protein uL16-like (RPL10L) from Macaca fascicularis (Crab-eating macaque).